Here is a 528-residue protein sequence, read N- to C-terminus: Putative galacturonosyltransferase 2 (528 aa).

It belongs to the glycosyltransferase 8 family.

Its pathway is glycan metabolism; pectin biosynthesis. Functionally, may be involved in pectin and/or xylans biosynthesis in cell walls. The chain is Putative galacturonosyltransferase 2 (GAUT2) from Arabidopsis thaliana (Mouse-ear cress).